A 338-amino-acid polypeptide reads, in one-letter code: 4'-phosphopantetheinyl transferase (338 aa).

This sequence belongs to the P-Pant transferase superfamily.

The catalysed reaction is apo-[ACP] + CoA = holo-[ACP] + adenosine 3',5'-bisphosphate + H(+). Functionally, acyl-carrier-protein synthase that transfers the 4'-phosphopantetheine moiety from coenzyme A to a Ser of an acyl-carrier-protein. The 4'-phosphopantetheine (4'-PPT) portion of CoA provides the essential prosthetic group for a number of carrier proteins and multi-domain enzymes, priming them for the acceptance of acyl building blocks in fatty acid synthesis and many aspects of secondary metabolism mediated by polyketide synthases (PKSs) and non-ribosomal peptide synthetases (NRPSs). Plays a key role in liamocins biosynthesis by activationg the HR-PKS PKS1 that produces 3,5-dihydroxydecanoic acid, a precursor of liamocins. The sequence is that of 4'-phosphopantetheinyl transferase from Aureobasidium melanogenum (Aureobasidium pullulans var. melanogenum).